A 164-amino-acid chain; its full sequence is Interferon gamma (164 aa).

Residues 1–19 (MTCQTYNLFVLSVIMIYYG) form the signal peptide. 2 N-linked (GlcNAc...) asparagine glycosylation sites follow: N42 and N61.

The protein belongs to the type II (or gamma) interferon family. As to quaternary structure, homodimer.

It localises to the secreted. Produced by lymphocytes activated by specific antigens or mitogens. IFN-gamma, in addition to having antiviral activity, has important immunoregulatory functions. It is a potent activator of macrophages, it has antiproliferative effects on transformed cells and it can potentiate the antiviral and antitumor effects of the type I interferons. The protein is Interferon gamma (IFNG) of Numida meleagris (Helmeted guineafowl).